The following is a 36-amino-acid chain: Esculentin-2R (36 aa).

A disulfide bridge links C30 with C36.

In terms of tissue distribution, expressed by the skin glands.

Its subcellular location is the secreted. In terms of biological role, antimicrobial peptide. The polypeptide is Esculentin-2R (Pelophylax ridibundus (Marsh frog)).